The chain runs to 160 residues: Ribosomal RNA large subunit methyltransferase H (160 aa).

Residues L78, G109, and 128–133 (LSNLTL) contribute to the S-adenosyl-L-methionine site.

Belongs to the RNA methyltransferase RlmH family. In terms of assembly, homodimer.

The protein resides in the cytoplasm. The catalysed reaction is pseudouridine(1915) in 23S rRNA + S-adenosyl-L-methionine = N(3)-methylpseudouridine(1915) in 23S rRNA + S-adenosyl-L-homocysteine + H(+). Its function is as follows. Specifically methylates the pseudouridine at position 1915 (m3Psi1915) in 23S rRNA. The chain is Ribosomal RNA large subunit methyltransferase H from Alcanivorax borkumensis (strain ATCC 700651 / DSM 11573 / NCIMB 13689 / SK2).